The sequence spans 333 residues: MAKIYYDEDASLDILKDKVIAILGYGSQGHAHALNLRDSGLNVIIGLHEGSRSREKAKADGFEVYTPREAAKRADIIMFLIPDTVQPEVYKNEVEPELNSSKTLAFAHGFNIHFRQIVPPKDVDVFMVAPKGPGHLVRWMYTEGKGVPALVAIHQDASGTCKDKALAYAKGIGATRAGVIETTFKEETETDLFGEQMVLCGGVTALIKAGFETLVNAGYQPEVAYFECLHELKLIVDLIYEHGISGMRYSISDTAKYGDVTRGERIYKVVKPVMEKTLEEIQKGEFAREWILENKAGRPVYYALLERDREHLVEKVGEELRKMMPWLGKKELK.

The region spanning 2–182 (AKIYYDEDAS…GATRAGVIET (181 aa)) is the KARI N-terminal Rossmann domain. NADP(+)-binding positions include 25-28 (YGSQ), S51, S53, and 83-86 (DTVQ). H108 is a catalytic residue. G134 contributes to the NADP(+) binding site. A KARI C-terminal knotted domain is found at 183 to 327 (TFKEETETDL…EELRKMMPWL (145 aa)). Positions 191, 195, 227, and 231 each coordinate Mg(2+). S252 provides a ligand contact to substrate.

The protein belongs to the ketol-acid reductoisomerase family. Mg(2+) serves as cofactor.

The catalysed reaction is (2R)-2,3-dihydroxy-3-methylbutanoate + NADP(+) = (2S)-2-acetolactate + NADPH + H(+). It carries out the reaction (2R,3R)-2,3-dihydroxy-3-methylpentanoate + NADP(+) = (S)-2-ethyl-2-hydroxy-3-oxobutanoate + NADPH + H(+). The protein operates within amino-acid biosynthesis; L-isoleucine biosynthesis; L-isoleucine from 2-oxobutanoate: step 2/4. It participates in amino-acid biosynthesis; L-valine biosynthesis; L-valine from pyruvate: step 2/4. Its function is as follows. Involved in the biosynthesis of branched-chain amino acids (BCAA). Catalyzes an alkyl-migration followed by a ketol-acid reduction of (S)-2-acetolactate (S2AL) to yield (R)-2,3-dihydroxy-isovalerate. In the isomerase reaction, S2AL is rearranged via a Mg-dependent methyl migration to produce 3-hydroxy-3-methyl-2-ketobutyrate (HMKB). In the reductase reaction, this 2-ketoacid undergoes a metal-dependent reduction by NADPH to yield (R)-2,3-dihydroxy-isovalerate. The sequence is that of Ketol-acid reductoisomerase (NADP(+)) from Aquifex aeolicus (strain VF5).